Consider the following 374-residue polypeptide: Cysteine-type anaerobic sulfatase-maturating enzyme (374 aa).

Positions 1 to 227 (MKSLSMLIKP…LNKLFDLWFK (227 aa)) constitute a Radical SAM core domain. Positions 15 and 19 each coordinate [4Fe-4S] cluster. Tyrosine 21 contributes to the S-adenosyl-L-methionine binding site. Position 22 (cysteine 22) interacts with [4Fe-4S] cluster. S-adenosyl-L-methionine-binding residues include glycine 66, serine 122, arginine 134, and leucine 195. Residues cysteine 255, cysteine 261, and cysteine 276 each coordinate [4Fe-4S] cluster. Aspartate 277 serves as the catalytic Proton acceptor. 5 residues coordinate [4Fe-4S] cluster: cysteine 317, cysteine 320, cysteine 326, cysteine 330, and cysteine 348.

The protein belongs to the radical SAM superfamily. Anaerobic sulfatase-maturating enzyme family. Requires [4Fe-4S] cluster as cofactor.

The enzyme catalyses L-cysteinyl-[sulfatase] + S-adenosyl-L-methionine + H2O = 3-oxo-L-alanyl-[sulfatase] + hydrogen sulfide + 5'-deoxyadenosine + L-methionine + 2 H(+). It functions in the pathway protein modification; sulfatase oxidation. Its function is as follows. Involved in 'Cys-type' sulfatase maturation under anaerobic conditions. Catalyzes the post-translational modification of cysteine into 3-oxoalanine (also known as C(alpha)-formylglycine (FGly)), by a free radical chemical mechanism initiated via the reductive cleavage of S-adenosyl-L-methionine (SAM). In Clostridium novyi (strain NT), this protein is Cysteine-type anaerobic sulfatase-maturating enzyme.